Reading from the N-terminus, the 397-residue chain is Phosphoglycerate kinase (397 aa).

Substrate-binding positions include 21–23 (DFN), R36, 59–62 (HCGR), R118, and R151. Residues K201, E323, and 353–356 (GGDT) contribute to the ATP site.

It belongs to the phosphoglycerate kinase family. Monomer.

The protein resides in the cytoplasm. It carries out the reaction (2R)-3-phosphoglycerate + ATP = (2R)-3-phospho-glyceroyl phosphate + ADP. It participates in carbohydrate degradation; glycolysis; pyruvate from D-glyceraldehyde 3-phosphate: step 2/5. In Bartonella tribocorum (strain CIP 105476 / IBS 506), this protein is Phosphoglycerate kinase.